The following is a 353-amino-acid chain: S-adenosylmethionine:tRNA ribosyltransferase-isomerase (353 aa).

Belongs to the QueA family. Monomer.

Its subcellular location is the cytoplasm. It catalyses the reaction 7-aminomethyl-7-carbaguanosine(34) in tRNA + S-adenosyl-L-methionine = epoxyqueuosine(34) in tRNA + adenine + L-methionine + 2 H(+). Its pathway is tRNA modification; tRNA-queuosine biosynthesis. Its function is as follows. Transfers and isomerizes the ribose moiety from AdoMet to the 7-aminomethyl group of 7-deazaguanine (preQ1-tRNA) to give epoxyqueuosine (oQ-tRNA). The chain is S-adenosylmethionine:tRNA ribosyltransferase-isomerase from Nitrosomonas europaea (strain ATCC 19718 / CIP 103999 / KCTC 2705 / NBRC 14298).